The primary structure comprises 274 residues: Penicillin-insensitive murein endopeptidase (274 aa).

The first 19 residues, 1 to 19 (MNKTAIALLALLASSASLA), serve as a signal peptide directing secretion. Disulfide bonds link C44-C265, C187-C235, and C216-C223. 6 residues coordinate Zn(2+): H110, H113, D120, D147, H150, and H211. Residues 228-264 (LPPPGDGCGAELQSWFAPPKPGTTKPEKKTPSPLPPS) form a disordered region.

It belongs to the peptidase M74 family. Dimer. Requires Zn(2+) as cofactor.

Its subcellular location is the periplasm. Its function is as follows. Murein endopeptidase that cleaves the D-alanyl-meso-2,6-diamino-pimelyl amide bond that connects peptidoglycan strands. Likely plays a role in the removal of murein from the sacculus. The chain is Penicillin-insensitive murein endopeptidase from Escherichia coli (strain 55989 / EAEC).